Reading from the N-terminus, the 152-residue chain is Protein Smg homolog (152 aa).

The protein belongs to the Smg family.

The sequence is that of Protein Smg homolog from Nitrosomonas eutropha (strain DSM 101675 / C91 / Nm57).